Reading from the N-terminus, the 122-residue chain is Riboflavin kinase (122 aa).

4–9 (GFGEGA) serves as a coordination point for CDP. Residues Thr33 and Asn35 each coordinate Mg(2+). Positions 84 and 92 each coordinate FMN. 97-100 (VNLR) contacts CDP.

Belongs to the archaeal riboflavin kinase family. Mg(2+) is required as a cofactor.

It carries out the reaction riboflavin + CTP = CDP + FMN + H(+). Its pathway is cofactor biosynthesis; FMN biosynthesis; FMN from riboflavin (CTP route): step 1/1. Its function is as follows. Catalyzes the CTP-dependent phosphorylation of riboflavin (vitamin B2) to form flavin mononucleotide (FMN). This Methanothermobacter thermautotrophicus (strain ATCC 29096 / DSM 1053 / JCM 10044 / NBRC 100330 / Delta H) (Methanobacterium thermoautotrophicum) protein is Riboflavin kinase.